We begin with the raw amino-acid sequence, 392 residues long: Formate-dependent phosphoribosylglycinamide formyltransferase (392 aa).

Residues 20–21 and glutamate 80 each bind N(1)-(5-phospho-beta-D-ribosyl)glycinamide; that span reads EL. Residues arginine 112, lysine 153, 158 to 163, 193 to 196, and glutamate 201 each bind ATP; these read SSGKGQ and EEFI. The region spanning 117-306 is the ATP-grasp domain; it reads RLAAEELGLP…EFELHVRAIL (190 aa). The Mg(2+) site is built by glutamate 265 and glutamate 277. N(1)-(5-phospho-beta-D-ribosyl)glycinamide is bound by residues aspartate 284, lysine 354, and 361-362; that span reads RR.

Belongs to the PurK/PurT family. In terms of assembly, homodimer.

The enzyme catalyses N(1)-(5-phospho-beta-D-ribosyl)glycinamide + formate + ATP = N(2)-formyl-N(1)-(5-phospho-beta-D-ribosyl)glycinamide + ADP + phosphate + H(+). It functions in the pathway purine metabolism; IMP biosynthesis via de novo pathway; N(2)-formyl-N(1)-(5-phospho-D-ribosyl)glycinamide from N(1)-(5-phospho-D-ribosyl)glycinamide (formate route): step 1/1. Involved in the de novo purine biosynthesis. Catalyzes the transfer of formate to 5-phospho-ribosyl-glycinamide (GAR), producing 5-phospho-ribosyl-N-formylglycinamide (FGAR). Formate is provided by PurU via hydrolysis of 10-formyl-tetrahydrofolate. In Geobacter metallireducens (strain ATCC 53774 / DSM 7210 / GS-15), this protein is Formate-dependent phosphoribosylglycinamide formyltransferase.